The following is a 119-amino-acid chain: ETRYEKFLRQHVDYPKSSAPDSRTYCNQMMQRRGMTSPVCKFTNTFVHASAASITTVCGSGGTPASGDLRDSNASFALTTCRLQGGSQTPNCPYNADASTQRIRIACVGGLPVHYDKSI.

The substrate site is built by Lys-6 and Arg-9. His-11 serves as the catalytic Proton acceptor. 3 cysteine pairs are disulfide-bonded: Cys-26–Cys-81, Cys-40–Cys-92, and Cys-58–Cys-107. Residues 41 to 45 and Arg-82 contribute to the substrate site; that span reads KFTNT. His-114 serves as the catalytic Proton donor.

Belongs to the pancreatic ribonuclease family. In terms of assembly, monomer. Interacts with and forms tight 1:1 complexes with RNH1. Dimerization of two such complexes may occur. Interaction with RNH1 inhibits this protein. In terms of tissue distribution, pancreas.

It is found in the secreted. It carries out the reaction an [RNA] containing cytidine + H2O = an [RNA]-3'-cytidine-3'-phosphate + a 5'-hydroxy-ribonucleotide-3'-[RNA].. The enzyme catalyses an [RNA] containing uridine + H2O = an [RNA]-3'-uridine-3'-phosphate + a 5'-hydroxy-ribonucleotide-3'-[RNA].. In terms of biological role, endonuclease that catalyzes the cleavage of RNA on the 3' side of pyrimidine nucleotides. Acts on single-stranded and double-stranded RNA. This chain is Ribonuclease, found in Chelydra serpentina (Snapping turtle).